The primary structure comprises 32 residues: Cytochrome b6-f complex subunit 7 (32 aa).

A helical membrane pass occupies residues 9–27 (AAVFWVLIPVGLLGGAILL).

Belongs to the PetM family. The 4 large subunits of the cytochrome b6-f complex are cytochrome b6, subunit IV (17 kDa polypeptide, PetD), cytochrome f and the Rieske protein, while the 4 small subunits are PetG, PetL, PetM and PetN. The complex functions as a dimer.

It is found in the cellular thylakoid membrane. Functionally, component of the cytochrome b6-f complex, which mediates electron transfer between photosystem II (PSII) and photosystem I (PSI), cyclic electron flow around PSI, and state transitions. This is Cytochrome b6-f complex subunit 7 from Prochlorococcus marinus (strain MIT 9211).